The chain runs to 296 residues: Cadherin-4 (296 aa).

3 Cadherin domains span residues 1–101, 102–216, and 217–296; these read NVPE…RPEF, INQV…PPEF, and TTST…MLTI. The Extracellular segment spans residues 1-296; sequence NVPENSRGPF…ELNRAFMLTI (296 aa). Residues Asn-107 and Asn-236 are each glycosylated (N-linked (GlcNAc...) asparagine).

It is found in the cell membrane. Functionally, cadherins are calcium-dependent cell adhesion proteins. They preferentially interact with themselves in a homophilic manner in connecting cells; cadherins may thus contribute to the sorting of heterogeneous cell types. May play an important role in retinal development. The polypeptide is Cadherin-4 (Cdh4) (Rattus norvegicus (Rat)).